The sequence spans 535 residues: T-box transcription factor TBX21 (535 aa).

The segment at 1–62 (MGIVEPGCGD…SLGSPYPGGA (62 aa)) is disordered. The residue at position 53 (Ser-53) is a Phosphoserine. Tyr-77 is modified (phosphotyrosine). Residues 83–109 (AAGFPGAGESFPPPADAEGYQPGEGYA) are disordered. Tyr-118 carries the post-translational modification Phosphotyrosine. The segment at residues 141–326 (LNNHLLWSKF…NNPFAKGFRE (186 aa)) is a DNA-binding region (T-box). Phosphotyrosine; by ABL1 is present on Tyr-220. Ser-225 carries the post-translational modification Phosphoserine. At Tyr-266 the chain carries Phosphotyrosine; by ABL1. The residue at position 303 (Thr-303) is a Phosphothreonine. A Phosphotyrosine; by ABL1 modification is found at Tyr-305. A Glycyl lysine isopeptide (Lys-Gly) (interchain with G-Cter in ubiquitin) cross-link involves residue Lys-314. Residues 449–535 (RPMRTLPMEP…EGQFYNYFPN (87 aa)) form a disordered region. Positions 503 to 520 (SPYPSSGDSSSPAGAPSP) are enriched in low complexity. Ser-513 carries the phosphoserine modification. Position 530 is a phosphotyrosine; by ITK (Tyr-530).

Interacts with RUNX1, RUNX3, ITK, ABL1, RELA, CDK9 and KDM6B. The phosphorylated form (at Thr-303) interacts with NFATC2. Interacts with SMARCA4 in a KDM6B-dependent manner. Interacts with CCTN1. Interacts with USP10. The phosphorylated form (at Tyr-530) interacts with GATA3. Phosphorylations at Ser-53, Tyr-77, Ser-225 and Ser-513 are regulated by mTORC1. Phosphorylation at Tyr-530 is essential for its interaction GATA3. Phosphorylation at Tyr-220, Tyr-266 and Tyr-305 enhances its transcriptional activator activity. Phosphorylation at Thr-303 is required for its interaction with NFATC2. Post-translationally, ubiquitinated at Lys-314, leading to its degradation by the proteasome. Ubiquitination is essential for controlling protein stability, binding to the T-box-binding element of the IFN-gamma promoter, and for interaction with NFATC2 through induction of phosphorylation at Thr-303. Deubiquitinated by USP10 leading to its stabilization. In terms of tissue distribution, T-cell specific.

It is found in the nucleus. Its function is as follows. Lineage-defining transcription factor which initiates Th1 lineage development from naive Th precursor cells both by activating Th1 genetic programs and by repressing the opposing Th2 and Th17 genetic programs. Activates transcription of a set of genes important for Th1 cell function, including those encoding IFN-gamma and the chemokine receptor CXCR3. Induces permissive chromatin accessibilty and CpG methylation in IFNG. Activates IFNG and CXCR3 genes in part by recruiting chromatin remodeling complexes including KDM6B, a SMARCA4-containing SWI/SNF-complex, and an H3K4me2-methyltransferase complex to their promoters and all of these complexes serve to establish a more permissive chromatin state conducive with transcriptional activation. Can activate Th1 genes also via recruitment of Mediator complex and P-TEFb (composed of CDK9 and CCNT1/cyclin-T1) in the form of the super elongation complex (SEC) to super-enhancers and associated genes in activated Th1 cells. Inhibits the Th17 cell lineage commitment by blocking RUNX1-mediated transactivation of Th17 cell-specific transcriptinal regulator RORC. Inhibits the Th2 cell lineage commitment by suppressing the production of Th2 cytokines, such as IL-4, IL-5, and IL- 13, via repression of transcriptional regulators GATA3 and NFATC2. Protects Th1 cells from amplifying aberrant type-I IFN response in an IFN-gamma abundant microenvironment by acting as a repressor of type-I IFN transcription factors and type-I IFN-stimulated genes. Acts as a regulator of antiviral B-cell responses; controls chronic viral infection by promoting the antiviral antibody IgG2a isotype switching and via regulation of a broad antiviral gene expression program. Required for the correct development of natural killer (NK) and mucosal-associated invariant T (MAIT) cells. The protein is T-box transcription factor TBX21 (TBX21) of Homo sapiens (Human).